Reading from the N-terminus, the 211-residue chain is Large ribosomal subunit protein uL3 (211 aa).

Positions 130-139 (QDATHGNSLS) are enriched in polar residues. The tract at residues 130–151 (QDATHGNSLSHRAPGSIGQNQT) is disordered. Glutamine 150 bears the N5-methylglutamine mark.

Belongs to the universal ribosomal protein uL3 family. As to quaternary structure, part of the 50S ribosomal subunit. Forms a cluster with proteins L14 and L19. Methylated by PrmB.

Its function is as follows. One of the primary rRNA binding proteins, it binds directly near the 3'-end of the 23S rRNA, where it nucleates assembly of the 50S subunit. This chain is Large ribosomal subunit protein uL3, found in Alcanivorax borkumensis (strain ATCC 700651 / DSM 11573 / NCIMB 13689 / SK2).